The primary structure comprises 142 residues: Putative pre-16S rRNA nuclease (142 aa).

Belongs to the YqgF nuclease family.

It is found in the cytoplasm. Its function is as follows. Could be a nuclease involved in processing of the 5'-end of pre-16S rRNA. The chain is Putative pre-16S rRNA nuclease from Desulfitobacterium hafniense (strain DSM 10664 / DCB-2).